The primary structure comprises 315 residues: 4-diphosphocytidyl-2-C-methyl-D-erythritol kinase (315 aa).

The active site involves lysine 10. Proline 107–alanine 117 provides a ligand contact to ATP. Aspartate 148 is an active-site residue. Residues histidine 292–glutamate 315 form a disordered region.

It belongs to the GHMP kinase family. IspE subfamily.

The catalysed reaction is 4-CDP-2-C-methyl-D-erythritol + ATP = 4-CDP-2-C-methyl-D-erythritol 2-phosphate + ADP + H(+). It functions in the pathway isoprenoid biosynthesis; isopentenyl diphosphate biosynthesis via DXP pathway; isopentenyl diphosphate from 1-deoxy-D-xylulose 5-phosphate: step 3/6. Functionally, catalyzes the phosphorylation of the position 2 hydroxy group of 4-diphosphocytidyl-2C-methyl-D-erythritol. This chain is 4-diphosphocytidyl-2-C-methyl-D-erythritol kinase, found in Corynebacterium efficiens (strain DSM 44549 / YS-314 / AJ 12310 / JCM 11189 / NBRC 100395).